The primary structure comprises 229 residues: Large ribosomal subunit protein uL1 (229 aa).

This sequence belongs to the universal ribosomal protein uL1 family. Part of the 50S ribosomal subunit.

Its function is as follows. Binds directly to 23S rRNA. The L1 stalk is quite mobile in the ribosome, and is involved in E site tRNA release. Protein L1 is also a translational repressor protein, it controls the translation of the L11 operon by binding to its mRNA. In Desulforamulus reducens (strain ATCC BAA-1160 / DSM 100696 / MI-1) (Desulfotomaculum reducens), this protein is Large ribosomal subunit protein uL1.